A 316-amino-acid chain; its full sequence is Beta-ketoacyl-[acyl-carrier-protein] synthase III 1 (316 aa).

Catalysis depends on residues cysteine 112 and histidine 243. Positions 244-248 are ACP-binding; the sequence is QANYR. The active site involves asparagine 273.

The protein belongs to the thiolase-like superfamily. FabH family. In terms of assembly, homodimer.

Its subcellular location is the cytoplasm. The enzyme catalyses malonyl-[ACP] + acetyl-CoA + H(+) = 3-oxobutanoyl-[ACP] + CO2 + CoA. It participates in lipid metabolism; fatty acid biosynthesis. Functionally, catalyzes the condensation reaction of fatty acid synthesis by the addition to an acyl acceptor of two carbons from malonyl-ACP. Catalyzes the first condensation reaction which initiates fatty acid synthesis and may therefore play a role in governing the total rate of fatty acid production. Possesses both acetoacetyl-ACP synthase and acetyl transacylase activities. Its substrate specificity determines the biosynthesis of branched-chain and/or straight-chain of fatty acids. In Vibrio cholerae serotype O1 (strain ATCC 39315 / El Tor Inaba N16961), this protein is Beta-ketoacyl-[acyl-carrier-protein] synthase III 1.